Consider the following 166-residue polypeptide: 3-hydroxyacyl-[acyl-carrier-protein] dehydratase FabZ (166 aa).

His-72 is a catalytic residue.

This sequence belongs to the thioester dehydratase family. FabZ subfamily.

It localises to the cytoplasm. The catalysed reaction is a (3R)-hydroxyacyl-[ACP] = a (2E)-enoyl-[ACP] + H2O. Functionally, involved in unsaturated fatty acids biosynthesis. Catalyzes the dehydration of short chain beta-hydroxyacyl-ACPs and long chain saturated and unsaturated beta-hydroxyacyl-ACPs. This is 3-hydroxyacyl-[acyl-carrier-protein] dehydratase FabZ from Synechococcus sp. (strain JA-2-3B'a(2-13)) (Cyanobacteria bacterium Yellowstone B-Prime).